A 902-amino-acid chain; its full sequence is Probable leucine--tRNA ligase, mitochondrial (902 aa).

At Lys67 the chain carries N6-acetyllysine. The 'HIGH' region motif lies at 91–101; that stretch reads YPSGKLHMGHV. Lys235 is subject to N6-acetyllysine. Positions 638–642 match the 'KMSKS' region motif; it reads KMSKS. Lys641 is a binding site for ATP.

It belongs to the class-I aminoacyl-tRNA synthetase family.

It localises to the mitochondrion matrix. It carries out the reaction tRNA(Leu) + L-leucine + ATP = L-leucyl-tRNA(Leu) + AMP + diphosphate. This Mus musculus (Mouse) protein is Probable leucine--tRNA ligase, mitochondrial (Lars2).